Here is a 300-residue protein sequence, read N- to C-terminus: tRNA pseudouridine synthase B (300 aa).

Residue aspartate 44 is the Nucleophile of the active site.

This sequence belongs to the pseudouridine synthase TruB family. Type 1 subfamily.

The catalysed reaction is uridine(55) in tRNA = pseudouridine(55) in tRNA. Functionally, responsible for synthesis of pseudouridine from uracil-55 in the psi GC loop of transfer RNAs. This is tRNA pseudouridine synthase B from Corynebacterium diphtheriae (strain ATCC 700971 / NCTC 13129 / Biotype gravis).